We begin with the raw amino-acid sequence, 396 residues long: Elongation factor Tu (396 aa).

The region spanning 10 to 205 (KSHANIGTIG…AVDEYIPTPE (196 aa)) is the tr-type G domain. Positions 19-26 (GHVDHGKT) are G1. 19–26 (GHVDHGKT) contributes to the GTP binding site. Mg(2+) is bound at residue T26. The segment at 61–65 (GITIS) is G2. The G3 stretch occupies residues 82–85 (DCPG). Residues 82–86 (DCPGH) and 137–140 (NKCD) each bind GTP. Positions 137-140 (NKCD) are G4. The segment at 175-177 (SAL) is G5.

Belongs to the TRAFAC class translation factor GTPase superfamily. Classic translation factor GTPase family. EF-Tu/EF-1A subfamily. As to quaternary structure, monomer.

It is found in the cytoplasm. It carries out the reaction GTP + H2O = GDP + phosphate + H(+). Functionally, GTP hydrolase that promotes the GTP-dependent binding of aminoacyl-tRNA to the A-site of ribosomes during protein biosynthesis. The protein is Elongation factor Tu of Bacillus pumilus (strain SAFR-032).